Reading from the N-terminus, the 782-residue chain is Endonuclease MutS2 (782 aa).

336–343 (GPNTGGKT) provides a ligand contact to ATP. The 76-residue stretch at 707 to 782 (LDLRGYRYEE…GFGVTVAELK (76 aa)) folds into the Smr domain.

It belongs to the DNA mismatch repair MutS family. MutS2 subfamily. Homodimer. Binds to stalled ribosomes, contacting rRNA.

Endonuclease that is involved in the suppression of homologous recombination and thus may have a key role in the control of bacterial genetic diversity. Functionally, acts as a ribosome collision sensor, splitting the ribosome into its 2 subunits. Detects stalled/collided 70S ribosomes which it binds and splits by an ATP-hydrolysis driven conformational change. Acts upstream of the ribosome quality control system (RQC), a ribosome-associated complex that mediates the extraction of incompletely synthesized nascent chains from stalled ribosomes and their subsequent degradation. Probably generates substrates for RQC. This is Endonuclease MutS2 from Staphylococcus carnosus (strain TM300).